Here is a 242-residue protein sequence, read N- to C-terminus: Biosynthetic peptidoglycan transglycosylase (242 aa).

A helical membrane pass occupies residues leucine 19–valine 39.

It belongs to the glycosyltransferase 51 family.

It localises to the cell inner membrane. The enzyme catalyses [GlcNAc-(1-&gt;4)-Mur2Ac(oyl-L-Ala-gamma-D-Glu-L-Lys-D-Ala-D-Ala)](n)-di-trans,octa-cis-undecaprenyl diphosphate + beta-D-GlcNAc-(1-&gt;4)-Mur2Ac(oyl-L-Ala-gamma-D-Glu-L-Lys-D-Ala-D-Ala)-di-trans,octa-cis-undecaprenyl diphosphate = [GlcNAc-(1-&gt;4)-Mur2Ac(oyl-L-Ala-gamma-D-Glu-L-Lys-D-Ala-D-Ala)](n+1)-di-trans,octa-cis-undecaprenyl diphosphate + di-trans,octa-cis-undecaprenyl diphosphate + H(+). It functions in the pathway cell wall biogenesis; peptidoglycan biosynthesis. Peptidoglycan polymerase that catalyzes glycan chain elongation from lipid-linked precursors. This chain is Biosynthetic peptidoglycan transglycosylase, found in Escherichia coli (strain 55989 / EAEC).